Reading from the N-terminus, the 154-residue chain is Mitochondrial fission 1 protein (154 aa).

Topologically, residues 1–124 (MEDLLNEVVP…KEIDKEVAKG (124 aa)) are cytoplasmic. Residues 125-145 (MVVAGGAALVLGGILGLGIAM) form a helical membrane-spanning segment. Residues 146–154 (ARNKQKREK) are Mitochondrial intermembrane-facing.

The protein belongs to the FIS1 family.

The protein localises to the mitochondrion outer membrane. In terms of biological role, involved in the fragmentation of the mitochondrial network and its perinuclear clustering. Functions downstream of Pink1 and upstream of Drp1 to regulate mitochondrial fission. The polypeptide is Mitochondrial fission 1 protein (Drosophila melanogaster (Fruit fly)).